A 384-amino-acid chain; its full sequence is Acetylornithine aminotransferase (384 aa).

Pyridoxal 5'-phosphate contacts are provided by residues 95–96 (GA) and F122. N(2)-acetyl-L-ornithine is bound at residue R125. Residue 207 to 210 (DEIQ) coordinates pyridoxal 5'-phosphate. Residue K236 is modified to N6-(pyridoxal phosphate)lysine. S264 serves as a coordination point for N(2)-acetyl-L-ornithine. T265 lines the pyridoxal 5'-phosphate pocket.

Belongs to the class-III pyridoxal-phosphate-dependent aminotransferase family. ArgD subfamily. Homodimer. It depends on pyridoxal 5'-phosphate as a cofactor.

The protein localises to the cytoplasm. It carries out the reaction N(2)-acetyl-L-ornithine + 2-oxoglutarate = N-acetyl-L-glutamate 5-semialdehyde + L-glutamate. Its pathway is amino-acid biosynthesis; L-arginine biosynthesis; N(2)-acetyl-L-ornithine from L-glutamate: step 4/4. This chain is Acetylornithine aminotransferase, found in Halalkalibacterium halodurans (strain ATCC BAA-125 / DSM 18197 / FERM 7344 / JCM 9153 / C-125) (Bacillus halodurans).